A 466-amino-acid polypeptide reads, in one-letter code: Glutamate--tRNA ligase 2 (466 aa).

The short motif at 11–21 (PSPTGFLHIGG) is the 'HIGH' region element. The short motif at 239-243 (KLSKR) is the 'KMSKS' region element. Residue lysine 242 participates in ATP binding.

This sequence belongs to the class-I aminoacyl-tRNA synthetase family. Glutamate--tRNA ligase type 1 subfamily. In terms of assembly, monomer.

The protein resides in the cytoplasm. The enzyme catalyses tRNA(Glu) + L-glutamate + ATP = L-glutamyl-tRNA(Glu) + AMP + diphosphate. Its function is as follows. Catalyzes the attachment of glutamate to tRNA(Glu) in a two-step reaction: glutamate is first activated by ATP to form Glu-AMP and then transferred to the acceptor end of tRNA(Glu). The polypeptide is Glutamate--tRNA ligase 2 (Roseobacter denitrificans (strain ATCC 33942 / OCh 114) (Erythrobacter sp. (strain OCh 114))).